The primary structure comprises 171 residues: Shikimate kinase (171 aa).

An ATP-binding site is contributed by 14–19; that stretch reads GAGKST. S18 serves as a coordination point for Mg(2+). 3 residues coordinate substrate: D36, R60, and G82. R120 contributes to the ATP binding site. R139 provides a ligand contact to substrate. Residue Q156 coordinates ATP.

This sequence belongs to the shikimate kinase family. In terms of assembly, monomer. Requires Mg(2+) as cofactor.

The protein localises to the cytoplasm. It carries out the reaction shikimate + ATP = 3-phosphoshikimate + ADP + H(+). The protein operates within metabolic intermediate biosynthesis; chorismate biosynthesis; chorismate from D-erythrose 4-phosphate and phosphoenolpyruvate: step 5/7. In terms of biological role, catalyzes the specific phosphorylation of the 3-hydroxyl group of shikimic acid using ATP as a cosubstrate. The chain is Shikimate kinase from Shewanella loihica (strain ATCC BAA-1088 / PV-4).